The sequence spans 150 residues: Putative esterase VC_A0580 (150 aa).

Belongs to the thioesterase PaaI family.

The chain is Putative esterase VC_A0580 from Vibrio cholerae serotype O1 (strain ATCC 39315 / El Tor Inaba N16961).